The following is a 414-amino-acid chain: Serine/arginine (SR)-type shuttling mRNA binding protein NPL3 (414 aa).

The span at 1–11 (MSEAQETHVEQ) shows a compositional bias: basic and acidic residues. Residues 1–119 (MSEAQETHVE…GRPPMHHRQE (119 aa)) are disordered. Position 15 is a phosphoserine (S15). The segment covering 33-51 (DAPQEPQVPQESAPQESAP) has biased composition (low complexity). Residues 52-68 (QEPPAPQEQNDVPPPSN) show a composition bias toward pro residues. The segment covering 75 to 92 (EESHSVQDYQEAHQHHQP) has biased composition (basic and acidic residues). S79 carries the post-translational modification Phosphoserine. Positions 93 to 105 (PEPQPYYPPPPPG) are enriched in pro residues. RRM domains follow at residues 125–195 (TRLF…YSKL) and 200–275 (YRIT…RDDN). Phosphoserine occurs at positions 182, 212, and 224. Positions 269-299 (TVERDDNPPPIRRSNRGGFRGRGGFRGGFRG) are disordered. Residues 286–299 (GFRGRGGFRGGFRG) are compositionally biased toward gly residues. Dimethylated arginine occurs at positions 288, 290, 294, and 298. Residue R302 is modified to Omega-N-methylarginine. Dimethylated arginine; alternate is present on residues R307 and R314. Omega-N-methylarginine; alternate is present on residues R307 and R314. An omega-N-methylarginine mark is found at R321, R329, R337, and R344. Positions 343 to 414 (SRGGYDSPRG…DAPRERSPTR (72 aa)) are disordered. Low complexity predominate over residues 346-360 (GYDSPRGGYDSPRGG). Residue R351 is modified to Dimethylated arginine; alternate. R351 is modified (omega-N-methylarginine; alternate). Residue S356 is modified to Phosphoserine. 4 positions are modified to dimethylated arginine; alternate: R358, R363, R377, and R384. R358, R363, R377, and R384 each carry omega-N-methylarginine; alternate. A compositionally biased stretch (gly residues) spans 379-389 (SYGGSRGGYDG). R391 carries the post-translational modification Omega-N-methylarginine. The span at 399-414 (DAYRTRDAPRERSPTR) shows a compositional bias: basic and acidic residues.

The protein belongs to the RRM GAR family. In terms of assembly, interacts with RRP6. Methylated by HMT1. The methylation is required for nuclear export.

The protein resides in the cytoplasm. The protein localises to the nucleus. Its subcellular location is the stress granule. In terms of biological role, involved in mRNA processing and export. Required for efficient splicing of a large set of pre-mRNAs by efficient co-transcriptional recruitment of the splicing machinery. Remains associated with the mRNP during early steps of translation elongation. This Saccharomyces cerevisiae (strain ATCC 204508 / S288c) (Baker's yeast) protein is Serine/arginine (SR)-type shuttling mRNA binding protein NPL3.